Here is a 168-residue protein sequence, read N- to C-terminus: ATP synthase subunit b, sodium ion specific (168 aa).

The chain crosses the membrane as a helical span at residues Val9–Phe29.

Belongs to the ATPase B chain family. F-type ATPases have 2 components, F(1) - the catalytic core - and F(0) - the membrane proton channel. F(1) has five subunits: alpha(3), beta(3), gamma(1), delta(1), epsilon(1). F(0) has three main subunits: a(1), b(2) and c(10-14). The alpha and beta chains form an alternating ring which encloses part of the gamma chain. F(1) is attached to F(0) by a central stalk formed by the gamma and epsilon chains, while a peripheral stalk is formed by the delta and b chains.

It localises to the cell inner membrane. Functionally, f(1)F(0) ATP synthase produces ATP from ADP in the presence of a proton or sodium gradient. F-type ATPases consist of two structural domains, F(1) containing the extramembraneous catalytic core and F(0) containing the membrane proton channel, linked together by a central stalk and a peripheral stalk. During catalysis, ATP synthesis in the catalytic domain of F(1) is coupled via a rotary mechanism of the central stalk subunits to proton translocation. Its function is as follows. Component of the F(0) channel, it forms part of the peripheral stalk, linking F(1) to F(0). The protein is ATP synthase subunit b, sodium ion specific (atpF) of Propionigenium modestum.